The primary structure comprises 260 residues: Enoyl-[acyl-carrier-protein] reductase [NADH] FabI (260 aa).

NAD(+)-binding positions include G15, 21-22 (SI), Q42, 66-67 (DV), and M94. Position 97 (A97) interacts with substrate. Active-site proton acceptor residues include Y147 and Y157. NAD(+) contacts are provided by residues K164 and 193–197 (IKTLA).

It belongs to the short-chain dehydrogenases/reductases (SDR) family. FabI subfamily. In terms of assembly, homotetramer.

The enzyme catalyses a 2,3-saturated acyl-[ACP] + NAD(+) = a (2E)-enoyl-[ACP] + NADH + H(+). Its pathway is lipid metabolism; fatty acid biosynthesis. In terms of biological role, catalyzes the reduction of a carbon-carbon double bond in an enoyl moiety that is covalently linked to an acyl carrier protein (ACP). Involved in the elongation cycle of fatty acid which are used in the lipid metabolism. In Rickettsia felis (strain ATCC VR-1525 / URRWXCal2) (Rickettsia azadi), this protein is Enoyl-[acyl-carrier-protein] reductase [NADH] FabI (fabI).